The following is a 146-amino-acid chain: 3-dehydroquinate dehydratase (146 aa).

The active-site Proton acceptor is the Y22. Substrate-binding residues include N73, H79, and D86. The Proton donor role is filled by H99. Substrate contacts are provided by residues 100 to 101 (LS) and R110.

This sequence belongs to the type-II 3-dehydroquinase family. As to quaternary structure, homododecamer.

The enzyme catalyses 3-dehydroquinate = 3-dehydroshikimate + H2O. It participates in metabolic intermediate biosynthesis; chorismate biosynthesis; chorismate from D-erythrose 4-phosphate and phosphoenolpyruvate: step 3/7. Functionally, catalyzes a trans-dehydration via an enolate intermediate. The protein is 3-dehydroquinate dehydratase of Synechococcus sp. (strain CC9605).